The chain runs to 562 residues: Protein wntless (562 aa).

Topologically, residues methionine 1–lysine 13 are cytoplasmic. A helical membrane pass occupies residues leucine 14 to leucine 34. The Lumenal segment spans residues tyrosine 35–glutamine 239. N-linked (GlcNAc...) asparagine glycosylation is present at asparagine 58. A helical membrane pass occupies residues isoleucine 240–tryptophan 260. At arginine 261–proline 270 the chain is on the cytoplasmic side. A helical transmembrane segment spans residues alanine 271 to leucine 291. Residues glutamate 292–glutamine 311 are Lumenal-facing. The helical transmembrane segment at glycine 312 to isoleucine 332 threads the bilayer. Residues glutamine 333 to arginine 344 are Cytoplasmic-facing. The helical transmembrane segment at tyrosine 345 to cysteine 365 threads the bilayer. Topologically, residues glutamate 366 to threonine 390 are lumenal. The chain crosses the membrane as a helical span at residues phenylalanine 391–tryptophan 411. Residues lysine 412–arginine 441 are Cytoplasmic-facing. A helical membrane pass occupies residues phenylalanine 442–methionine 462. The Lumenal segment spans residues glycine 463–serine 482. The helical transmembrane segment at alanine 483–tyrosine 503 threads the bilayer. The Cytoplasmic portion of the chain corresponds to alanine 504 to aspartate 562. The segment at histidine 539–aspartate 562 is disordered. The segment covering proline 541–threonine 556 has biased composition (polar residues).

This sequence belongs to the wntless family. Interacts with wg; in the Golgi. Interacts with Vps35, a component of the retromer complex; wls stability is regulated by Vps35.

Its subcellular location is the presynaptic cell membrane. The protein resides in the postsynaptic cell membrane. It is found in the cell membrane. The protein localises to the endoplasmic reticulum membrane. It localises to the endosome membrane. Its subcellular location is the golgi apparatus membrane. Its function is as follows. A segment polarity gene required for wingless (wg)-dependent patterning processes, acting in both wg-sending cells and wg-target cells. In non-neuronal cells wls directs wg secretion. The wls traffic loop encompasses the Golgi, the cell surface, an endocytic compartment and a retrograde route leading back to the Golgi, and involves clathrin-mediated endocytosis and the retromer complex (a conserved protein complex consisting of Vps35 and Vps26). In neuronal cells (the larval motorneuron NMJ), the wg signal moves across the synapse via the release of wls-containing exosome-like vesicles. Postsynaptic wls is required for the trafficking of fz2 through the fz2-interacting protein Grip. The sequence is that of Protein wntless from Drosophila erecta (Fruit fly).